A 491-amino-acid polypeptide reads, in one-letter code: Aspartyl/glutamyl-tRNA(Asn/Gln) amidotransferase subunit B (491 aa).

This sequence belongs to the GatB/GatE family. GatB subfamily. Heterotrimer of A, B and C subunits.

It carries out the reaction L-glutamyl-tRNA(Gln) + L-glutamine + ATP + H2O = L-glutaminyl-tRNA(Gln) + L-glutamate + ADP + phosphate + H(+). It catalyses the reaction L-aspartyl-tRNA(Asn) + L-glutamine + ATP + H2O = L-asparaginyl-tRNA(Asn) + L-glutamate + ADP + phosphate + 2 H(+). Functionally, allows the formation of correctly charged Asn-tRNA(Asn) or Gln-tRNA(Gln) through the transamidation of misacylated Asp-tRNA(Asn) or Glu-tRNA(Gln) in organisms which lack either or both of asparaginyl-tRNA or glutaminyl-tRNA synthetases. The reaction takes place in the presence of glutamine and ATP through an activated phospho-Asp-tRNA(Asn) or phospho-Glu-tRNA(Gln). This is Aspartyl/glutamyl-tRNA(Asn/Gln) amidotransferase subunit B from Paraburkholderia xenovorans (strain LB400).